An 897-amino-acid polypeptide reads, in one-letter code: Pre-mRNA-splicing factor CWC22 homolog (897 aa).

Residues 1 to 10 show a composition bias toward polar residues; sequence MSSSRSQSPE. Positions 1–155 are disordered; sequence MSSSRSQSPE…EKKKKEPLDI (155 aa). Composition is skewed to basic and acidic residues over residues 36–54, 93–107, and 131–155; these read SSEKSASRSQSPRESREVS, RSKETRESESPEKSP, and RSSERKQSEEPAPLPEKKKKEPLDI. The MIF4G domain maps to 194–382; that stretch reads KKKIHGLVNR…ETAMQIRKDK (189 aa). A disordered region spans residues 444 to 472; the sequence is NADISDEDGGDELDDEEEGSDVEEAPKKT. Positions 447-466 are enriched in acidic residues; the sequence is ISDEDGGDELDDEEEGSDVE. Residues 485–601 enclose the MI domain; sequence AFRREVYLTM…DWKILADMKM (117 aa). Low complexity-rich tracts occupy residues 689–710 and 720–730; these read LDQLKAESSSDSSSSSDSSDSS and DSSSDSSSSSE. The tract at residues 689–897 is disordered; sequence LDQLKAESSS…VESDDRRRRR (209 aa). Residues 743 to 897 are compositionally biased toward basic and acidic residues; sequence NSEESSKKKE…VESDDRRRRR (155 aa).

This sequence belongs to the CWC22 family. In terms of tissue distribution, expressed in germ cells, oocytes, and sperm cells.

The protein localises to the nucleus. Its subcellular location is the nucleus speckle. Required for pre-mRNA splicing and for exon-junction complex (EJC) assembly. Hinders EIF4A3 from non-specifically binding RNA and escorts it to the splicing machinery to promote EJC assembly on mature mRNAs. Through its role in EJC assembly, required for nonsense-mediated mRNA decay. Plays a role in the nuclear retention of unspliced mRNAs. Plays a role in sex determination. Required for early embryogenesis and tissue differentiation. This chain is Pre-mRNA-splicing factor CWC22 homolog, found in Caenorhabditis elegans.